We begin with the raw amino-acid sequence, 217 residues long: Thymidylate kinase (217 aa).

12 to 19 (GIDGSGKS) contacts ATP.

Belongs to the thymidylate kinase family.

It carries out the reaction dTMP + ATP = dTDP + ADP. Functionally, phosphorylation of dTMP to form dTDP in both de novo and salvage pathways of dTTP synthesis. The sequence is that of Thymidylate kinase from Cereibacter sphaeroides (strain ATCC 17023 / DSM 158 / JCM 6121 / CCUG 31486 / LMG 2827 / NBRC 12203 / NCIMB 8253 / ATH 2.4.1.) (Rhodobacter sphaeroides).